Consider the following 167-residue polypeptide: Lipoprotein signal peptidase (167 aa).

Helical transmembrane passes span 8–28 (TFLTLLLLASIDWVSKLVVLL), 46–66 (WGHFSFLIIPSFNEGAAFGLF), 68–88 (QYKIPLLIFRVCVILGLALFL), and 101–121 (VALTLILAGALGNVGDILLYG). Residues aspartate 125 and aspartate 143 contribute to the active site. The helical transmembrane segment at 139 to 159 (FNLADAFISIGTLLLIGHLYF) threads the bilayer.

It belongs to the peptidase A8 family.

Its subcellular location is the cell inner membrane. The enzyme catalyses Release of signal peptides from bacterial membrane prolipoproteins. Hydrolyzes -Xaa-Yaa-Zaa-|-(S,diacylglyceryl)Cys-, in which Xaa is hydrophobic (preferably Leu), and Yaa (Ala or Ser) and Zaa (Gly or Ala) have small, neutral side chains.. It functions in the pathway protein modification; lipoprotein biosynthesis (signal peptide cleavage). Its function is as follows. This protein specifically catalyzes the removal of signal peptides from prolipoproteins. In Chlamydia trachomatis serovar A (strain ATCC VR-571B / DSM 19440 / HAR-13), this protein is Lipoprotein signal peptidase.